The chain runs to 443 residues: MTQQKSQRVPRVGFVSLGCPKATVDSEHILTRLRAEGYDLSGSYDDADLVVVNTCGFIDAAVEESLDAIGEALAENGKVIVTGCLGAKDDVILAAHPQVLAVTGPHATDAVVKAVHQHLPKPHDPFTDLIPPQGIRLTPAHYAYLKISEGCNHRCSFCIIPSMRGDLVSRPVHDVMREAESLVDSGVKELLVISQDTSAYGVDMKYRTGFWNGRPLKTRLIDLAKALGELGVWVRMHYVYPYPSVDELIPLMAEGKILPYLDVPFQHASPRILKAMKRPGNVENVLERIRKWRSICPDLTIRSTFITGFPGETDEDFEQLLRFLEEAQLDRVGAFAYSPVEGAAANLLADPVPDEVREERRMRLMDFQEDISTQRLERWIGRDITVLVEEVDDEGAVARSGSDAPEVDGLVIIPDGDGLVPGEFAKVRVTDCDVHDLYARPLP.

The 111-residue stretch at 10–120 (PRVGFVSLGC…VVKAVHQHLP (111 aa)) folds into the MTTase N-terminal domain. 6 residues coordinate [4Fe-4S] cluster: cysteine 19, cysteine 55, cysteine 84, cysteine 151, cysteine 155, and cysteine 158. Positions 137 to 375 (LTPAHYAYLK…DFQEDISTQR (239 aa)) constitute a Radical SAM core domain. One can recognise a TRAM domain in the interval 377-443 (ERWIGRDITV…VHDLYARPLP (67 aa)).

The protein belongs to the methylthiotransferase family. RimO subfamily. Requires [4Fe-4S] cluster as cofactor.

Its subcellular location is the cytoplasm. It carries out the reaction L-aspartate(89)-[ribosomal protein uS12]-hydrogen + (sulfur carrier)-SH + AH2 + 2 S-adenosyl-L-methionine = 3-methylsulfanyl-L-aspartate(89)-[ribosomal protein uS12]-hydrogen + (sulfur carrier)-H + 5'-deoxyadenosine + L-methionine + A + S-adenosyl-L-homocysteine + 2 H(+). In terms of biological role, catalyzes the methylthiolation of an aspartic acid residue of ribosomal protein uS12. The chain is Ribosomal protein uS12 methylthiotransferase RimO from Aromatoleum aromaticum (strain DSM 19018 / LMG 30748 / EbN1) (Azoarcus sp. (strain EbN1)).